Reading from the N-terminus, the 435-residue chain is Probable histidine--tRNA ligase, cytoplasmic (435 aa).

It belongs to the class-II aminoacyl-tRNA synthetase family.

The protein localises to the cytoplasm. The enzyme catalyses tRNA(His) + L-histidine + ATP = L-histidyl-tRNA(His) + AMP + diphosphate + H(+). This chain is Probable histidine--tRNA ligase, cytoplasmic, found in Encephalitozoon cuniculi (strain GB-M1) (Microsporidian parasite).